The chain runs to 58 residues: Large ribosomal subunit protein bL32 (58 aa).

2 disordered regions span residues 1 to 22 (MAVP…HWKR) and 39 to 58 (LSGR…DDEE).

The protein belongs to the bacterial ribosomal protein bL32 family.

The protein is Large ribosomal subunit protein bL32 of Crocosphaera subtropica (strain ATCC 51142 / BH68) (Cyanothece sp. (strain ATCC 51142)).